A 181-amino-acid chain; its full sequence is NADH-quinone oxidoreductase subunit I 2 (181 aa).

2 4Fe-4S ferredoxin-type domains span residues 44–74 and 90–119; these read LNRY…VEGA and RVYQ…MTND. Cysteine 54, cysteine 57, cysteine 60, cysteine 64, cysteine 99, cysteine 102, cysteine 105, and cysteine 109 together coordinate [4Fe-4S] cluster.

Belongs to the complex I 23 kDa subunit family. As to quaternary structure, NDH-1 is composed of 14 different subunits. Subunits NuoA, H, J, K, L, M, N constitute the membrane sector of the complex. The cofactor is [4Fe-4S] cluster.

It is found in the cell membrane. It catalyses the reaction a quinone + NADH + 5 H(+)(in) = a quinol + NAD(+) + 4 H(+)(out). In terms of biological role, NDH-1 shuttles electrons from NADH, via FMN and iron-sulfur (Fe-S) centers, to quinones in the respiratory chain. The immediate electron acceptor for the enzyme in this species is believed to be menaquinone. Couples the redox reaction to proton translocation (for every two electrons transferred, four hydrogen ions are translocated across the cytoplasmic membrane), and thus conserves the redox energy in a proton gradient. The sequence is that of NADH-quinone oxidoreductase subunit I 2 from Mycolicibacterium paratuberculosis (strain ATCC BAA-968 / K-10) (Mycobacterium paratuberculosis).